The primary structure comprises 266 residues: Probable dihydroorotate dehydrogenase B (NAD(+)), electron transfer subunit (266 aa).

An FAD-binding FR-type domain is found at 5-99; it reads NVPEVLEIKR…RGPYGRGFEL (95 aa). Positions 217, 222, 225, and 235 each coordinate [2Fe-2S] cluster.

The protein belongs to the PyrK family. Heterotetramer of 2 PyrK and 2 PyrD type B subunits. Requires [2Fe-2S] cluster as cofactor. FAD serves as cofactor.

It participates in pyrimidine metabolism; UMP biosynthesis via de novo pathway; orotate from (S)-dihydroorotate (NAD(+) route): step 1/1. Its function is as follows. Responsible for channeling the electrons from the oxidation of dihydroorotate from the FMN redox center in the PyrD type B subunit to the ultimate electron acceptor NAD(+). This is Probable dihydroorotate dehydrogenase B (NAD(+)), electron transfer subunit from Methanothermobacter thermautotrophicus (strain ATCC 29096 / DSM 1053 / JCM 10044 / NBRC 100330 / Delta H) (Methanobacterium thermoautotrophicum).